Reading from the N-terminus, the 328-residue chain is MAAAAAAAAAATNGTGGSSGMEVDAAVVPSVMASGVTGSVSVALHPLVILNISDHWIRMRSQEGRPVQVIGALIGKQEGRNIEVMNSFELLSHTVEEKIIIDKEYYYTKEEQFKQVFKELEFLGWYTTGGPPDPSDIHVHKQVCEIIESPLFLKLNPMTKHTDLPVSVFESVIDIINGEATMLFAELTYTLATEEAERIGVDHVARMTATGSGENSTVAEHLIAQHSAIKMLHSRVKLILEYVKASEAGEVPFNHEILREAYALCHCLPVLSTDKFKTDFYDQCNDVGLMAYLGTITKTCNTMNQFVNKFNVLYDRQGIGRRMRGLFF.

In terms of domain architecture, MPN spans 42–175 (VALHPLVILN…VSVFESVIDI (134 aa)).

Belongs to the peptidase M67A family. CSN6 subfamily. In terms of assembly, component of the CSN complex, composed of COPS1/GPS1, COPS2, COPS3, COPS4, COPS5, COPS6, COPS7 (COPS7A or COPS7B), COPS8 and COPS9. In the complex, it probably interacts directly with COPS2, COPS4, COPS5, COPS7 (COPS7A or COPS7B) and COPS9. Interacts with the translation initiation factor EIF3S6. Interacts weakly with RBX1. Directly interacts with COP1 and 14-3-3 protein sigma/SFN. Interacts with ERCC6.

It is found in the cytoplasm. Its subcellular location is the nucleus. In terms of biological role, component of the COP9 signalosome complex (CSN), a complex involved in various cellular and developmental processes. The CSN complex is an essential regulator of the ubiquitin (Ubl) conjugation pathway by mediating the deneddylation of the cullin subunits of SCF-type E3 ligase complexes, leading to decrease the Ubl ligase activity of SCF-type complexes such as SCF, CSA or DDB2. The complex is also involved in phosphorylation of p53/TP53, c-jun/JUN, IkappaBalpha/NFKBIA, ITPK1 and IRF8, possibly via its association with CK2 and PKD kinases. CSN-dependent phosphorylation of TP53 and JUN promotes and protects degradation by the Ubl system, respectively. Has some glucocorticoid receptor-responsive activity. Stabilizes COP1 through reducing COP1 auto-ubiquitination and decelerating COP1 turnover rate, hence regulates the ubiquitination of COP1 targets, including SFN. The protein is COP9 signalosome complex subunit 6 (COPS6) of Pongo abelii (Sumatran orangutan).